The following is a 64-amino-acid chain: Alpha-conotoxin CnIA (64 aa).

Residues 1-21 (MGMRMMFTVFLLVVLTTTVVS) form the signal peptide. Positions 22 to 47 (FPSDSASDGRDDEAKDERSDIYESKR) are excised as a propeptide. Intrachain disulfides connect Cys51–Cys56 and Cys52–Cys62. Pro54 carries the 4-hydroxyproline; in CnIK; partial modification. A Cysteine amide modification is found at Cys62.

The protein belongs to the conotoxin A superfamily. In terms of tissue distribution, expressed by the venom duct.

It localises to the secreted. Alpha-conotoxins act on postsynaptic membranes, they bind to the nicotinic acetylcholine receptors (nAChR) and thus inhibit them. CnIA and CnIB block muscular nAChR alpha-1/gamma and alpha-1/delta subunits. The polypeptide is Alpha-conotoxin CnIA (Conus consors (Singed cone)).